Consider the following 465-residue polypeptide: MFRQEQPLAEGSFAPMGSLQPEAGNASWNGTEAPGGGARATPYSLQVTLTLVCLAGLLMLFTVFGNVLVIIAVFTSRALKAPQNLFLVSLASADILVATLVIPFSLANEVMGYWYFGKAWCEIYLALDVLFCTSSIVHLCAISLDRYWSITQAIEYNLKRTPRRIKAIIVTVWVISAVISFPPLISIEKKAGGGGQQPAEPRCEINDQKWYVISSCIGSFFAPCLIMILVYVRIYQIAKRRTRVPPSRRGPDAAAALPGGAERRPNGLGPERGVGRVGAEAEPLPVQLNGAPGEPAPAGPRDADGLDLEESSSSEHAERPPGPRRSERGPRAKSKARASQVKPGDSLPRRGPGAPGPGAPATGAGEERGGVAKASRWRGRQNREKRFTFVLAVVIGVFVVCWFPFFFTYTLTAVGCSVPPTLFKFFFWFGYCNSSLNPVIYTIFNHDFRRAFKKILCRGDRKRIV.

The Extracellular portion of the chain corresponds to 1-48; that stretch reads MFRQEQPLAEGSFAPMGSLQPEAGNASWNGTEAPGGGARATPYSLQVT. Residues Asn25 and Asn29 are each glycosylated (N-linked (GlcNAc...) asparagine). A helical transmembrane segment spans residues 49 to 74; it reads LTLVCLAGLLMLFTVFGNVLVIIAVF. The Cytoplasmic segment spans residues 75–85; that stretch reads TSRALKAPQNL. A helical membrane pass occupies residues 86–111; it reads FLVSLASADILVATLVIPFSLANEVM. Residues 112-121 lie on the Extracellular side of the membrane; it reads GYWYFGKAWC. An intrachain disulfide couples Cys121 to Cys203. A helical membrane pass occupies residues 122–144; it reads EIYLALDVLFCTSSIVHLCAISL. Residues 145 to 164 lie on the Cytoplasmic side of the membrane; sequence DRYWSITQAIEYNLKRTPRR. A helical membrane pass occupies residues 165–188; that stretch reads IKAIIVTVWVISAVISFPPLISIE. Residues 189–207 are Extracellular-facing; it reads KKAGGGGQQPAEPRCEIND. The helical transmembrane segment at 208-232 threads the bilayer; that stretch reads QKWYVISSCIGSFFAPCLIMILVYV. Residues 233–389 lie on the Cytoplasmic side of the membrane; it reads RIYQIAKRRT…RQNREKRFTF (157 aa). Residues 242–377 are disordered; the sequence is TRVPPSRRGP…RGGVAKASRW (136 aa). Positions 313–330 are enriched in basic and acidic residues; sequence SSEHAERPPGPRRSERGP. The residue at position 346 (Ser346) is a Phosphoserine. Arg368 carries the post-translational modification Omega-N-methylarginine. A helical transmembrane segment spans residues 390–414; that stretch reads VLAVVIGVFVVCWFPFFFTYTLTAV. Over 415–424 the chain is Extracellular; that stretch reads GCSVPPTLFK. The chain crosses the membrane as a helical span at residues 425 to 445; the sequence is FFFWFGYCNSSLNPVIYTIFN. Over 446–465 the chain is Cytoplasmic; it reads HDFRRAFKKILCRGDRKRIV. A lipid anchor (S-palmitoyl cysteine) is attached at Cys457.

It belongs to the G-protein coupled receptor 1 family. Adrenergic receptor subfamily. ADRA2A sub-subfamily.

It localises to the cell membrane. Functionally, alpha-2 adrenergic receptors mediate the catecholamine-induced inhibition of adenylate cyclase through the action of G proteins. The chain is Alpha-2A adrenergic receptor from Sus scrofa (Pig).